Consider the following 393-residue polypeptide: MDSHKSPKETVLITGGGGYFGFRLGCALNLLGVHVILFDISHPAQTIPEGIRFILGDIRCLSDIENAFQGVDVACVFHIASYGMSGREQLNRSLIEEINVGGTDNILQACRRRGVPRLVYTSTFNVIFGGQVIRNGDESLPYLPLHLHPDHYSRTKSIAEKKVLSANGTALERGGGVLSTCALRPAGIYGPGEQRHLPRIVSYIEKGLFRFVYGDPKSLVEFVHVDNLVQAHILASEALKANKGHIAAGQPYFISDGRPVNNFEFFRPLVEGLGYKFPSTRLPLTLIYCFAFLTEMTHFILGRLYNFQPFLTRTEVYKTGVTHYFSLEKARKELGYEAQPFDLQEAVEWFKAHGHGRRPGSCDSKCLVWDGLVILLVVTVVLVWLLPSVILSM.

Y152 acts as the Proton acceptor in catalysis. K156 provides a ligand contact to NAD(+). The next 2 membrane-spanning stretches (helical) occupy residues 282-302 (LPLT…FILG) and 371-391 (GLVI…SVIL).

Belongs to the 3-beta-HSD family.

It localises to the membrane. In Bos taurus (Bovine), this protein is Short-chain dehydrogenase/reductase family 42E member 1 (SDR42E1).